Reading from the N-terminus, the 558-residue chain is Dihydroxy-acid dehydratase (558 aa).

Cysteine 48 contributes to the [2Fe-2S] cluster binding site. Aspartate 80 contacts Mg(2+). Cysteine 121 is a [2Fe-2S] cluster binding site. Aspartate 122 and lysine 123 together coordinate Mg(2+). Residue lysine 123 is modified to N6-carboxylysine. Cysteine 193 is a binding site for [2Fe-2S] cluster. Glutamate 445 provides a ligand contact to Mg(2+). The Proton acceptor role is filled by serine 471.

It belongs to the IlvD/Edd family. In terms of assembly, homodimer. [2Fe-2S] cluster is required as a cofactor. Requires Mg(2+) as cofactor.

The catalysed reaction is (2R)-2,3-dihydroxy-3-methylbutanoate = 3-methyl-2-oxobutanoate + H2O. It carries out the reaction (2R,3R)-2,3-dihydroxy-3-methylpentanoate = (S)-3-methyl-2-oxopentanoate + H2O. Its pathway is amino-acid biosynthesis; L-isoleucine biosynthesis; L-isoleucine from 2-oxobutanoate: step 3/4. It functions in the pathway amino-acid biosynthesis; L-valine biosynthesis; L-valine from pyruvate: step 3/4. Its function is as follows. Functions in the biosynthesis of branched-chain amino acids. Catalyzes the dehydration of (2R,3R)-2,3-dihydroxy-3-methylpentanoate (2,3-dihydroxy-3-methylvalerate) into 2-oxo-3-methylpentanoate (2-oxo-3-methylvalerate) and of (2R)-2,3-dihydroxy-3-methylbutanoate (2,3-dihydroxyisovalerate) into 2-oxo-3-methylbutanoate (2-oxoisovalerate), the penultimate precursor to L-isoleucine and L-valine, respectively. The polypeptide is Dihydroxy-acid dehydratase (Prochlorococcus marinus (strain SARG / CCMP1375 / SS120)).